The primary structure comprises 351 residues: MQRNRVLAFLLLAAQLLVKIPETCAKFPALIVFGDSTVDSGNNNQISTVLKSNFQPYGRDYFDGKATGRFSNGRIAPDFISEGLGLKNAVPAYLDPAYNIADFATGVCFASAGTGLDNATSAVLSVMPLWKEVEYYKEYQTRLRSYLGEEKANEIISESLYLISIGTNDFLENYYLLPRKLRKYSVNEYQYFLIGIAADFVTDIYRLGARKMSLSGLSPFGCLPLERTTQLFYGSKCIEEYNIVARDFNIKMEEKVFQLNRDLNGIQLVFSNPYDLVSEIIYHPEAFGFENVRSACCGTGYYEMSYLCDKMNPFTCSDASKYVFWDSFHPTEKTNAIVANHVLKYDLSRFQ.

The N-terminal stretch at 1-25 is a signal peptide; the sequence is MQRNRVLAFLLLAAQLLVKIPETCA. S36 (nucleophile) is an active-site residue. N118 carries an N-linked (GlcNAc...) asparagine glycan. Active-site residues include D326 and H329.

This sequence belongs to the 'GDSL' lipolytic enzyme family.

It localises to the secreted. The sequence is that of GDSL esterase/lipase At4g26790 from Arabidopsis thaliana (Mouse-ear cress).